We begin with the raw amino-acid sequence, 407 residues long: Imidazolonepropionase (407 aa).

Residues His72 and His74 each coordinate Fe(3+). Residues His72 and His74 each coordinate Zn(2+). 4-imidazolone-5-propanoate contacts are provided by Arg81, Tyr144, and His177. Tyr144 contributes to the N-formimidoyl-L-glutamate binding site. His242 is a Fe(3+) binding site. A Zn(2+)-binding site is contributed by His242. Residue Gln245 participates in 4-imidazolone-5-propanoate binding. Asp317 provides a ligand contact to Fe(3+). Asp317 is a Zn(2+) binding site. N-formimidoyl-L-glutamate contacts are provided by Asn319 and Gly321. Thr322 is a binding site for 4-imidazolone-5-propanoate.

It belongs to the metallo-dependent hydrolases superfamily. HutI family. It depends on Zn(2+) as a cofactor. The cofactor is Fe(3+).

The protein resides in the cytoplasm. The enzyme catalyses 4-imidazolone-5-propanoate + H2O = N-formimidoyl-L-glutamate. It participates in amino-acid degradation; L-histidine degradation into L-glutamate; N-formimidoyl-L-glutamate from L-histidine: step 3/3. Catalyzes the hydrolytic cleavage of the carbon-nitrogen bond in imidazolone-5-propanoate to yield N-formimidoyl-L-glutamate. It is the third step in the universal histidine degradation pathway. This chain is Imidazolonepropionase, found in Aliivibrio salmonicida (strain LFI1238) (Vibrio salmonicida (strain LFI1238)).